The following is an 814-amino-acid chain: Acyl-coenzyme A dehydrogenase (814 aa).

The active-site Proton acceptor is the Glu-497.

Belongs to the acyl-CoA dehydrogenase family. Requires FAD as cofactor.

The enzyme catalyses a medium-chain 2,3-saturated fatty acyl-CoA + oxidized [electron-transfer flavoprotein] + H(+) = a medium-chain (2E)-enoyl-CoA + reduced [electron-transfer flavoprotein]. It catalyses the reaction a long-chain 2,3-saturated fatty acyl-CoA + oxidized [electron-transfer flavoprotein] + H(+) = a long-chain (2E)-enoyl-CoA + reduced [electron-transfer flavoprotein]. It participates in lipid metabolism; fatty acid beta-oxidation. Its function is as follows. Catalyzes the dehydrogenation of acyl-coenzymes A (acyl-CoAs) to 2-enoyl-CoAs, the first step of the beta-oxidation cycle of fatty acid degradation. Is required for the utilization of medium- and long-chain fatty acids as sole carbon sources for growth. In Escherichia coli O157:H7, this protein is Acyl-coenzyme A dehydrogenase (fadE).